The sequence spans 445 residues: POU domain, class 5, transcription factor 1.2 (445 aa).

Composition is skewed to polar residues over residues Ser-76 to Pro-88 and Ile-164 to Asn-182. 2 disordered regions span residues Ser-76–Pro-116 and Thr-139–Glu-227. A compositionally biased stretch (low complexity) spans Ser-183–Thr-200. The POU-specific domain occupies Glu-218–Glu-292. A DNA-binding region (homeobox) is located at residues Lys-312 to Val-371.

This sequence belongs to the POU transcription factor family. Class-5 subfamily. Interacts with the transcription factors tcf7l1/tcf3 and vegt. Initially (stage 9) expressed in all regions of the embryo, becoming localized to the ventroposterior regions by early neurula stages. In adults, expressed at a low level in the brain.

The protein resides in the nucleus. Transcription factor that binds to the octamer motif (5'-ATTTGCAT-3'). Antagonizes the activity of nodal/activin signaling during gastrulation to suppress mesendoderm formation. In Xenopus laevis (African clawed frog), this protein is POU domain, class 5, transcription factor 1.2 (pou5f1.2).